We begin with the raw amino-acid sequence, 347 residues long: Fructose-1,6-bisphosphatase (347 aa).

Residues 19-23 (ILQEQ) and 44-48 (SGELS) contribute to the AMP site. Mg(2+) contacts are provided by Asp85 and Glu114. 127–128 (SY) provides a ligand contact to AMP. The Mg(2+) site is built by Asp133, Ile135, and Asp136. Residue 136 to 139 (DGSS) participates in substrate binding. AMP is bound at residue Lys155. Substrate contacts are provided by residues 227–230 (NEGY), 258–263 (RYIGSM), Tyr279, and 288–290 (KLR). A Mg(2+)-binding site is contributed by Glu294.

This sequence belongs to the FBPase class 1 family. Homotetramer. The cofactor is Mg(2+).

The enzyme catalyses beta-D-fructose 1,6-bisphosphate + H2O = beta-D-fructose 6-phosphate + phosphate. It participates in carbohydrate biosynthesis; gluconeogenesis. Subject to complex allosteric regulation. The enzyme can assume an active R-state, or an inactive T-state. Intermediate conformations may exist. AMP acts as allosteric inhibitor. AMP binding affects the turnover of bound substrate and not the affinity for substrate. The protein is Fructose-1,6-bisphosphatase (fbp1) of Schizosaccharomyces pombe (strain 972 / ATCC 24843) (Fission yeast).